The sequence spans 413 residues: Protein SLX4IP (413 aa).

Glycyl lysine isopeptide (Lys-Gly) (interchain with G-Cter in SUMO2) cross-links involve residues Lys-61, Lys-79, Lys-167, Lys-176, and Lys-236. Disordered stretches follow at residues 172–193 (RTKSKGTDVSKPQPSGDLVGRS) and 228–300 (SHQE…GSVE). Residues 238 to 254 (ENVSQTQPGDTRSQQQL) are compositionally biased toward polar residues. Residues Lys-288, Lys-344, and Lys-353 each participate in a glycyl lysine isopeptide (Lys-Gly) (interchain with G-Cter in SUMO2) cross-link. A disordered region spans residues 363 to 413 (SSRHLVTNNPGQAQQSDSAAITEQLATDQGGPSKKRKKLQSYNRGCSGKKN). Residues 364–389 (SRHLVTNNPGQAQQSDSAAITEQLAT) show a composition bias toward polar residues. Thr-389 carries the post-translational modification Phosphothreonine. Lys-396 participates in a covalent cross-link: Glycyl lysine isopeptide (Lys-Gly) (interchain with G-Cter in SUMO2).

The protein belongs to the SLX4IP family. Interacts with SLX4/BTBD12; subunit of different structure-specific endonucleases.

The protein is Protein SLX4IP (Slx4ip) of Mus musculus (Mouse).